Consider the following 92-residue polypeptide: Small ribosomal subunit protein uS17 (92 aa).

It belongs to the universal ribosomal protein uS17 family. In terms of assembly, part of the 30S ribosomal subunit.

Its function is as follows. One of the primary rRNA binding proteins, it binds specifically to the 5'-end of 16S ribosomal RNA. The sequence is that of Small ribosomal subunit protein uS17 from Corynebacterium urealyticum (strain ATCC 43042 / DSM 7109).